A 500-amino-acid chain; its full sequence is Ribose import ATP-binding protein RbsA (500 aa).

2 consecutive ABC transporter domains span residues 3–239 and 246–493; these read IEMK…VGRE and DRTP…TGGV. 35 to 42 is an ATP binding site; sequence GENGAGKS.

It belongs to the ABC transporter superfamily. Ribose importer (TC 3.A.1.2.1) family. As to quaternary structure, the complex is composed of an ATP-binding protein (RbsA), two transmembrane proteins (RbsC) and a solute-binding protein (RbsB).

The protein resides in the cell membrane. The catalysed reaction is D-ribose(out) + ATP + H2O = D-ribose(in) + ADP + phosphate + H(+). Part of the ABC transporter complex RbsABC involved in ribose import. Responsible for energy coupling to the transport system. The polypeptide is Ribose import ATP-binding protein RbsA (Lacticaseibacillus paracasei (strain ATCC 334 / BCRC 17002 / CCUG 31169 / CIP 107868 / KCTC 3260 / NRRL B-441) (Lactobacillus paracasei)).